Reading from the N-terminus, the 430-residue chain is Tol-Pal system protein TolB (430 aa).

An N-terminal signal peptide occupies residues 1–21; the sequence is MKQALRVAFGFLMLWAAVLHA.

The protein belongs to the TolB family. In terms of assembly, the Tol-Pal system is composed of five core proteins: the inner membrane proteins TolA, TolQ and TolR, the periplasmic protein TolB and the outer membrane protein Pal. They form a network linking the inner and outer membranes and the peptidoglycan layer.

The protein resides in the periplasm. Functionally, part of the Tol-Pal system, which plays a role in outer membrane invagination during cell division and is important for maintaining outer membrane integrity. TolB occupies a key intermediary position in the Tol-Pal system because it communicates directly with both membrane-embedded components, Pal in the outer membrane and TolA in the inner membrane. The polypeptide is Tol-Pal system protein TolB (Salmonella enteritidis PT4 (strain P125109)).